The primary structure comprises 223 residues: Small ribosomal subunit protein uS3 (223 aa).

The 69-residue stretch at 40 to 108 folds into the KH type-2 domain; it reads IRELVHRELP…KVHLNIQEIR (69 aa).

It belongs to the universal ribosomal protein uS3 family. Part of the 30S ribosomal subunit. Forms a tight complex with proteins S10 and S14.

Functionally, binds the lower part of the 30S subunit head. Binds mRNA in the 70S ribosome, positioning it for translation. This Thermomicrobium roseum (strain ATCC 27502 / DSM 5159 / P-2) protein is Small ribosomal subunit protein uS3.